The primary structure comprises 283 residues: DNA repair protein RecO (283 aa).

Belongs to the RecO family.

Involved in DNA repair and RecF pathway recombination. This chain is DNA repair protein RecO, found in Gloeothece citriformis (strain PCC 7424) (Cyanothece sp. (strain PCC 7424)).